We begin with the raw amino-acid sequence, 244 residues long: Transcriptional activator protein anr (244 aa).

Ala-21–Asp-149 contributes to the a nucleoside 3',5'-cyclic phosphate binding site. An HTH crp-type domain is found at Lys-159–Ile-232. The H-T-H motif DNA-binding region spans Arg-192 to Thr-211.

Functionally, transcriptional activator of anaerobic gene expression. The protein is Transcriptional activator protein anr (anr) of Pseudomonas aeruginosa (strain ATCC 15692 / DSM 22644 / CIP 104116 / JCM 14847 / LMG 12228 / 1C / PRS 101 / PAO1).